The primary structure comprises 81 residues: ATP synthase subunit c, chloroplastic (81 aa).

2 consecutive transmembrane segments (helical) span residues 3–23 (PLVFAASVIAAGLAVGLASIG) and 57–77 (LAFMEALTIYGLVVALALLFA).

The protein belongs to the ATPase C chain family. In terms of assembly, F-type ATPases have 2 components, F(1) - the catalytic core - and F(0) - the membrane proton channel. F(1) has five subunits: alpha(3), beta(3), gamma(1), delta(1), epsilon(1). F(0) has four main subunits: a(1), b(1), b'(1) and c(10-14). The alpha and beta chains form an alternating ring which encloses part of the gamma chain. F(1) is attached to F(0) by a central stalk formed by the gamma and epsilon chains, while a peripheral stalk is formed by the delta, b and b' chains.

The protein resides in the plastid. Its subcellular location is the chloroplast thylakoid membrane. Functionally, f(1)F(0) ATP synthase produces ATP from ADP in the presence of a proton or sodium gradient. F-type ATPases consist of two structural domains, F(1) containing the extramembraneous catalytic core and F(0) containing the membrane proton channel, linked together by a central stalk and a peripheral stalk. During catalysis, ATP synthesis in the catalytic domain of F(1) is coupled via a rotary mechanism of the central stalk subunits to proton translocation. Key component of the F(0) channel; it plays a direct role in translocation across the membrane. A homomeric c-ring of between 10-14 subunits forms the central stalk rotor element with the F(1) delta and epsilon subunits. This chain is ATP synthase subunit c, chloroplastic, found in Atropa belladonna (Belladonna).